The primary structure comprises 2261 residues: Phospholipid-transporting ATPase ABCA1 (2261 aa).

Residue cysteine 3 is the site of S-palmitoyl cysteine attachment. Asparagine 14 carries an N-linked (GlcNAc...) asparagine glycan. The helical transmembrane segment at 22-42 (TCQLLLEVAWPLFIFLILISV) threads the bilayer. The S-palmitoyl cysteine moiety is linked to residue cysteine 23. Over 43 to 639 (RLSYPPYEQH…DIFLRVMSRS (597 aa)) the chain is Extracellular. The annulus domain 1 stretch occupies residues 69 to 80 (WVQGIICNANNP). Cysteines 75 and 309 form a disulfide. Asparagine 98, asparagine 151, asparagine 161, asparagine 196, asparagine 244, asparagine 292, asparagine 337, and asparagine 349 each carry an N-linked (GlcNAc...) asparagine glycan. The annulus domain 2 stretch occupies residues 368 to 379 (SRIIWKALKPLL). Residues asparagine 400, asparagine 478, asparagine 489, and asparagine 521 are each glycosylated (N-linked (GlcNAc...) asparagine). The segment at 564–594 (ERTNKIKDGYWDPGPRADPFEDMRYVWGGFA) is gateway domain. 5 helical membrane-spanning segments follow: residues 640-660 (MPLF…KGIV), 683-703 (FSWF…LVVI), 716-736 (SVVF…CFLI), 745-765 (LAAA…VLCV), and 777-797 (IFAS…FALF). An N-linked (GlcNAc...) asparagine glycan is attached at asparagine 820. A helical membrane pass occupies residues 827–847 (MMLFDTFLYGVMTWYIEAVFP). Positions 899–1131 (VSIQNLVKVY…LGTGYYLTLV (233 aa)) constitute an ABC transporter 1 domain. Position 933–940 (933–940 (GHNGAGKT)) interacts with ATP. The helical transmembrane segment at 1041–1057 (LSVALAFVGGSKVVILD) threads the bilayer. Serine 1042 is modified (phosphoserine; by PKA). S-palmitoyl cysteine attachment occurs at residues cysteine 1110 and cysteine 1111. N-linked (GlcNAc...) asparagine glycans are attached at residues asparagine 1144 and asparagine 1294. The segment at 1283–1312 (RPFTEDDAADPNDSDIDPESRETDLLSGMD) is disordered. Over residues 1287-1299 (EDDAADPNDSDID) the composition is skewed to acidic residues. Position 1296 is a phosphoserine (serine 1296). The helical transmembrane segment at 1351-1371 (IVLPAVFVCIALVFSLIVPPF) threads the bilayer. The Extracellular segment spans residues 1372-1656 (GKYPSLELQP…ALMTTSVDVL (285 aa)). An N-linked (GlcNAc...) asparagine glycan is attached at asparagine 1453. Cysteine 1463 and cysteine 1477 are joined by a disulfide. 2 N-linked (GlcNAc...) asparagine glycosylation sites follow: asparagine 1504 and asparagine 1637. Transmembrane regions (helical) follow at residues 1657-1677 (VSIC…VFLI), 1703-1723 (FVWD…IFIC), 1735-1755 (LPVL…LMYP), 1768-1788 (VVLT…TFVL), 1802-1822 (ILKS…LIDM), and 1852-1872 (NLFA…LIQY). Residues 1912-2144 (LEIKELTKIY…FGDGYTIVVR (233 aa)) enclose the ABC transporter 2 domain. 1946 to 1953 (GVNGAGKS) contributes to the ATP binding site. Asparagine 2044 is a glycosylation site (N-linked (GlcNAc...) asparagine). At serine 2054 the chain carries Phosphoserine; by PKA. The N-linked (GlcNAc...) asparagine glycan is linked to asparagine 2238.

It belongs to the ABC transporter superfamily. ABCA family. Interacts with MEGF10. May interact with APOE1; functionally associated with APOE1 in the biogenesis of HDLs. Interacts with ABCA8; this interaction potentiates cholesterol efflux. Interacts with ABCA12 and NR1H2; this interaction is required for ABCA1 localization to the cell surface and is necessary for its normal activity and stability. In terms of processing, phosphorylation on Ser-2054 regulates phospholipid efflux. Palmitoylated by ZDHHC8. Palmitoylation is essential for localization to the plasma membrane. As to expression, widely expressed, but most abundant in macrophages.

It localises to the cell membrane. It is found in the endosome. The enzyme catalyses ATP + H2O + phospholipidSide 1 = ADP + phosphate + phospholipidSide 2.. It carries out the reaction a 1,2-diacyl-sn-glycero-3-phosphocholine(out) + ATP + H2O = a 1,2-diacyl-sn-glycero-3-phosphocholine(in) + ADP + phosphate + H(+). The catalysed reaction is a 1,2-diacyl-sn-glycero-3-phospho-L-serine(out) + ATP + H2O = a 1,2-diacyl-sn-glycero-3-phospho-L-serine(in) + ADP + phosphate + H(+). It catalyses the reaction a sphingomyelin(in) + ATP + H2O = a sphingomyelin(out) + ADP + phosphate + H(+). The enzyme catalyses cholesterol(in) + ATP + H2O = cholesterol(out) + ADP + phosphate + H(+). ATPase activity is decreased by cholesterol and ceramide. ATPase activity is stimulated by phosphatidylcholine and to a lesser degree by phosphatidylserine and sphingomyelin. Phospholipid translocase activity is highly reduced by berylium fluoride and aluminum flouride and reduced by N-ethylmaleimide. Catalyzes the translocation of specific phospholipids from the cytoplasmic to the extracellular/lumenal leaflet of membrane coupled to the hydrolysis of ATP. Thereby, participates in phospholipid transfer to apolipoproteins to form nascent high density lipoproteins/HDLs. Transports preferentially phosphatidylcholine over phosphatidylserine. May play a similar role in the efflux of intracellular cholesterol to apolipoproteins and the formation of nascent high density lipoproteins/HDLs. Translocates phospholipids from the outer face of the plasma membrane and forces it through its gateway and annulus into an elongated hydrophobic tunnel in its extracellular domain. In Homo sapiens (Human), this protein is Phospholipid-transporting ATPase ABCA1.